We begin with the raw amino-acid sequence, 242 residues long: Ribosomal RNA small subunit methyltransferase G (242 aa).

S-adenosyl-L-methionine-binding positions include G78, L83, 130–131 (AE), and R151.

This sequence belongs to the methyltransferase superfamily. RNA methyltransferase RsmG family.

The protein resides in the cytoplasm. Its function is as follows. Specifically methylates the N7 position of guanine in position 518 of 16S rRNA. This is Ribosomal RNA small subunit methyltransferase G from Salinispora tropica (strain ATCC BAA-916 / DSM 44818 / JCM 13857 / NBRC 105044 / CNB-440).